The chain runs to 824 residues: Fibroblast growth factor receptor 2 (824 aa).

The first 21 residues, 1–21 (MFSWSYLMGLVMVATATLSLA), serve as a signal peptide directing secretion. The Extracellular segment spans residues 22 to 374 (RPSYNIAEDT…LDSSSSEYTE (353 aa)). An Ig-like C2-type 1 domain is found at 25–125 (YNIAEDTTLE…ETRYFIVNIT (101 aa)). A disulfide bridge links C62 with C107. N83, N123, and N128 each carry an N-linked (GlcNAc...) asparagine glycan. The disordered stretch occupies residues 125–152 (TDGNSSGDDEDDNDGSEDFTNDNNHKRA). A compositionally biased stretch (acidic residues) spans 131–144 (GDDEDDNDGSEDFT). Ig-like C2-type domains follow at residues 153 to 246 (PYWT…YHLD) and 254 to 356 (PPIL…AWLT). The interval 160–177 (KLEKKLHAVPAANTVKFR) is heparin-binding. C178 and C230 form a disulfide bridge. 6 N-linked (GlcNAc...) asparagine glycosylation sites follow: N227, N240, N264, N295, N316, and N329. C277 and C340 are oxidised to a cystine. A helical membrane pass occupies residues 375–395 (IAIYCVGGFLIACMIGTIMMC). Residues 396 to 824 (HMKGRGKKSD…PLKHEATQPA (429 aa)) are Cytoplasmic-facing. Y463 carries the post-translational modification Phosphotyrosine; by autocatalysis. Residues 478–767 (LTLGKPLGEG…LTQTTNEEYL (290 aa)) form the Protein kinase domain. ATP-binding positions include 484–492 (LGEGCFGQV), K514, 562–564 (EYA), and N568. At Y583 the chain carries Phosphotyrosine; by autocatalysis. The active-site Proton acceptor is D623. Phosphotyrosine; by autocatalysis occurs at positions 653, 654, and 766. Residues 801–824 (SMNLAFPNPNTQMAPLKHEATQPA) are disordered.

Belongs to the protein kinase superfamily. Tyr protein kinase family. Fibroblast growth factor receptor subfamily. Monomer. Homodimer after ligand binding. Autophosphorylated. Binding of FGF family members together with heparan sulfate proteoglycan or heparin promotes receptor dimerization and autophosphorylation on tyrosine residues. Autophosphorylation occurs in trans between the two FGFR molecules present in the dimer. In terms of processing, N-glycosylated in the endoplasmic reticulum. The N-glycan chains undergo further maturation to an Endo H-resistant form in the Golgi apparatus. Post-translationally, ubiquitinated. FGFR2 is rapidly ubiquitinated after autophosphorylation, leading to internalization and degradation. Subject to degradation both in lysosomes and by the proteasome.

It localises to the cell membrane. The protein resides in the golgi apparatus. The protein localises to the cytoplasmic vesicle. The catalysed reaction is L-tyrosyl-[protein] + ATP = O-phospho-L-tyrosyl-[protein] + ADP + H(+). Its activity is regulated as follows. Present in an inactive conformation in the absence of bound ligand. Ligand binding leads to dimerization and activation by autophosphorylation on tyrosine residues. Functionally, tyrosine-protein kinase that acts as a cell-surface receptor for fibroblast growth factors and plays an essential role in the regulation of cell proliferation, differentiation, migration and apoptosis, and in the regulation of embryonic development. Required for normal embryonic patterning, limb bud development, lung morphogenesis, osteogenesis and skin development. Plays an essential role in the regulation of osteoblast differentiation, proliferation and apoptosis, and is required for normal skeleton development. Promotes cell proliferation in keratinocytes and immature osteoblasts, but promotes apoptosis in differentiated osteoblasts. Phosphorylates PLCG1, FRS2 and PAK4. Ligand binding leads to the activation of several signaling cascades. Activation of PLCG1 leads to the production of the cellular signaling molecules diacylglycerol and inositol 1,4,5-trisphosphate. Phosphorylation of FRS2 triggers recruitment of GRB2, GAB1, PIK3R1 and SOS1, and mediates activation of RAS, MAPK1/ERK2, MAPK3/ERK1 and the MAP kinase signaling pathway, as well as of the AKT1 signaling pathway. FGFR2 signaling is down-regulated by ubiquitination, internalization and degradation. Mutations that lead to constitutive kinase activation or impair normal FGFR2 maturation, internalization and degradation lead to aberrant signaling. Over-expressed FGFR2 promotes activation of STAT1. The protein is Fibroblast growth factor receptor 2 (FGFR2) of Pleurodeles waltl (Iberian ribbed newt).